Here is a 463-residue protein sequence, read N- to C-terminus: Hexose-6-phosphate:phosphate antiporter (463 aa).

Over 1–24 (MLAFLNQVRKPTLDLPLEVRRKMW) the chain is Cytoplasmic. Residues 25–45 (FKPFMQSYLVVFIGYLTMYLI) traverse the membrane as a helical segment. At 46-60 (RKNFNIAQNDMISTY) the chain is on the periplasmic side. The chain crosses the membrane as a helical span at residues 61 to 81 (GLSMTQLGMIGLGFSITYGVG). Residues 82–96 (KTLVSYYADGKNTKQ) lie on the Cytoplasmic side of the membrane. A helical transmembrane segment spans residues 97 to 117 (FLPFMLILSAICMLGFSASMG). Over 118–120 (SGS) the chain is Periplasmic. The chain crosses the membrane as a helical span at residues 121–141 (VSLFLMIAFYALSGFFQSTGG). The Cytoplasmic portion of the chain corresponds to 142–159 (SCSYSTITKWTPRRKRGT). Residues 160–180 (FLGFWNISHNLGGAGAAGVAL) form a helical membrane-spanning segment. Over 181 to 189 (FGANYLFDG) the chain is Periplasmic. Residues 190–210 (HVIGMFIFPSIIALIVGFIGL) form a helical membrane-spanning segment. Residues 211–259 (RYGSDSPESYGLGKAEELFGEEISEEDKETESTDMTKWQIFVEYVLKNK) lie on the Cytoplasmic side of the membrane. A helical membrane pass occupies residues 260 to 280 (VIWLLCFANIFLYVVRIGIDQ). At 281–297 (WSTVYAFQELKLSKAVA) the chain is on the periplasmic side. The chain crosses the membrane as a helical span at residues 298–318 (IQGFTLFEAGALVGTLLWGWL). The Cytoplasmic segment spans residues 319–326 (SDLANGRR). A helical transmembrane segment spans residues 327-347 (GLVACIALALIIATLGVYQHA). The Periplasmic segment spans residues 348–357 (SNEYIYLASL). A helical membrane pass occupies residues 358–378 (FALGFLVFGPQLLIGVAAVGF). The Cytoplasmic segment spans residues 379–382 (VPKK). Residues 383–403 (AIGAADGIKGTFAYLIGDSFA) traverse the membrane as a helical segment. Topologically, residues 404 to 425 (KLGLGMIADGTPVFGLTGWAGT) are periplasmic. A helical membrane pass occupies residues 426-446 (FAALDIAAIGCICLMAIVAVM). Topologically, residues 447 to 463 (EERKIRREKKIQQLTVA) are cytoplasmic.

This sequence belongs to the major facilitator superfamily. Organophosphate:Pi antiporter (OPA) (TC 2.A.1.4) family.

It localises to the cell inner membrane. Mediates the exchange of external hexose 6-phosphate and internal inorganic phosphate. The protein is Hexose-6-phosphate:phosphate antiporter (uhpT) of Escherichia coli O157:H7.